Here is a 348-residue protein sequence, read N- to C-terminus: Protein RecA (348 aa).

Position 65–72 (65–72 (GPESSGKT)) interacts with ATP.

This sequence belongs to the RecA family.

Its subcellular location is the cytoplasm. In terms of biological role, can catalyze the hydrolysis of ATP in the presence of single-stranded DNA, the ATP-dependent uptake of single-stranded DNA by duplex DNA, and the ATP-dependent hybridization of homologous single-stranded DNAs. It interacts with LexA causing its activation and leading to its autocatalytic cleavage. This Vibrio anguillarum (Listonella anguillarum) protein is Protein RecA.